The sequence spans 100 residues: Succinate dehydrogenase subunit 7B, mitochondrial (100 aa).

Positions 1–25 are disordered; sequence MAFLLNNASISSHLRSSSSQKTGDA. The transit peptide at 1–32 directs the protein to the mitochondrion; the sequence is MAFLLNNASISSHLRSSSSQKTGDALSISRRG. A compositionally biased stretch (low complexity) spans 9–19; sequence SISSHLRSSSS.

As to quaternary structure, component of complex II composed of eight subunits in plants: four classical SDH subunits SDH1, SDH2, SDH3 and SDH4 (a flavoprotein (FP), an iron-sulfur protein (IP), and a cytochrome b composed of a large and a small subunit.), as well as four subunits unknown in mitochondria from bacteria and heterotrophic eukaryotes.

Its subcellular location is the mitochondrion inner membrane. The protein operates within carbohydrate metabolism; tricarboxylic acid cycle. The chain is Succinate dehydrogenase subunit 7B, mitochondrial from Arabidopsis thaliana (Mouse-ear cress).